The primary structure comprises 359 residues: Histidinol-phosphate aminotransferase (359 aa).

Residue lysine 217 is modified to N6-(pyridoxal phosphate)lysine.

It belongs to the class-II pyridoxal-phosphate-dependent aminotransferase family. Histidinol-phosphate aminotransferase subfamily. Homodimer. Pyridoxal 5'-phosphate is required as a cofactor.

The enzyme catalyses L-histidinol phosphate + 2-oxoglutarate = 3-(imidazol-4-yl)-2-oxopropyl phosphate + L-glutamate. It participates in amino-acid biosynthesis; L-histidine biosynthesis; L-histidine from 5-phospho-alpha-D-ribose 1-diphosphate: step 7/9. The protein is Histidinol-phosphate aminotransferase of Salmonella newport (strain SL254).